Here is a 283-residue protein sequence, read N- to C-terminus: Pantothenate synthetase (283 aa).

Position 30-37 (30-37 (MGYLHEGH)) interacts with ATP. Histidine 37 functions as the Proton donor in the catalytic mechanism. Glutamine 61 contributes to the (R)-pantoate binding site. Glutamine 61 provides a ligand contact to beta-alanine. Residue 147–150 (GRKD) participates in ATP binding. Glutamine 153 serves as a coordination point for (R)-pantoate. Residues valine 176 and 184–187 (MSSR) contribute to the ATP site.

Belongs to the pantothenate synthetase family. In terms of assembly, homodimer.

Its subcellular location is the cytoplasm. It catalyses the reaction (R)-pantoate + beta-alanine + ATP = (R)-pantothenate + AMP + diphosphate + H(+). It functions in the pathway cofactor biosynthesis; (R)-pantothenate biosynthesis; (R)-pantothenate from (R)-pantoate and beta-alanine: step 1/1. Functionally, catalyzes the condensation of pantoate with beta-alanine in an ATP-dependent reaction via a pantoyl-adenylate intermediate. The polypeptide is Pantothenate synthetase (Syntrophotalea carbinolica (strain DSM 2380 / NBRC 103641 / GraBd1) (Pelobacter carbinolicus)).